The chain runs to 153 residues: Large ribosomal subunit protein bL9 (153 aa).

The protein belongs to the bacterial ribosomal protein bL9 family.

In terms of biological role, binds to the 23S rRNA. The chain is Large ribosomal subunit protein bL9 from Gloeobacter violaceus (strain ATCC 29082 / PCC 7421).